The sequence spans 385 residues: Chaperone protein DnaJ (385 aa).

Residues 3–68 enclose the J domain; it reads DYYEILGVTR…QKRAAYDRFG (66 aa). A CR-type zinc finger spans residues 135–213; the sequence is GAEVEITVPA…CHGHGQVRRE (79 aa). C148, C151, C165, C168, C187, C190, C201, and C204 together coordinate Zn(2+). 4 CXXCXGXG motif repeats span residues 148–155, 165–172, 187–194, and 201–208; these read CEVCEGSG, CGTCGGAG, CPRCGGSG, and CSNCHGHG.

The protein belongs to the DnaJ family. As to quaternary structure, homodimer. Zn(2+) is required as a cofactor.

It localises to the cytoplasm. Its function is as follows. Participates actively in the response to hyperosmotic and heat shock by preventing the aggregation of stress-denatured proteins and by disaggregating proteins, also in an autonomous, DnaK-independent fashion. Unfolded proteins bind initially to DnaJ; upon interaction with the DnaJ-bound protein, DnaK hydrolyzes its bound ATP, resulting in the formation of a stable complex. GrpE releases ADP from DnaK; ATP binding to DnaK triggers the release of the substrate protein, thus completing the reaction cycle. Several rounds of ATP-dependent interactions between DnaJ, DnaK and GrpE are required for fully efficient folding. Also involved, together with DnaK and GrpE, in the DNA replication of plasmids through activation of initiation proteins. The protein is Chaperone protein DnaJ of Caulobacter vibrioides (strain ATCC 19089 / CIP 103742 / CB 15) (Caulobacter crescentus).